The chain runs to 387 residues: 3-ketoacyl-CoA thiolase (387 aa).

Catalysis depends on Cys91, which acts as the Acyl-thioester intermediate. Active-site proton acceptor residues include His343 and Cys373.

This sequence belongs to the thiolase-like superfamily. Thiolase family. As to quaternary structure, heterotetramer of two alpha chains (FadB) and two beta chains (FadA).

It localises to the cytoplasm. It catalyses the reaction an acyl-CoA + acetyl-CoA = a 3-oxoacyl-CoA + CoA. The protein operates within lipid metabolism; fatty acid beta-oxidation. In terms of biological role, catalyzes the final step of fatty acid oxidation in which acetyl-CoA is released and the CoA ester of a fatty acid two carbons shorter is formed. This is 3-ketoacyl-CoA thiolase from Shigella sonnei (strain Ss046).